A 399-amino-acid polypeptide reads, in one-letter code: Elongation factor Tu (399 aa).

Residues 10–209 form the tr-type G domain; that stretch reads KPHVNIGTIG…EVDAYIPTPE (200 aa). Residues 19–26 are G1; the sequence is GHVDHGKT. 19-26 serves as a coordination point for GTP; the sequence is GHVDHGKT. Thr-26 contributes to the Mg(2+) binding site. A G2 region spans residues 60–64; that stretch reads GITIA. The tract at residues 81–84 is G3; the sequence is DCPG. GTP is bound by residues 81-85 and 136-139; these read DCPGH and NKQD. The tract at residues 136 to 139 is G4; it reads NKQD. Residues 174–176 form a G5 region; that stretch reads SAL.

Belongs to the TRAFAC class translation factor GTPase superfamily. Classic translation factor GTPase family. EF-Tu/EF-1A subfamily. Monomer.

The protein resides in the cytoplasm. It carries out the reaction GTP + H2O = GDP + phosphate + H(+). Its function is as follows. GTP hydrolase that promotes the GTP-dependent binding of aminoacyl-tRNA to the A-site of ribosomes during protein biosynthesis. The sequence is that of Elongation factor Tu from Helicobacter pylori (strain G27).